The sequence spans 463 residues: MPTTTEFDTIAAISTPPGEGGISIIRISGDQTFNVVTQIFKGKDLSRVQSHTINYGHIVDPDTHQEVDEVMATVMRAPKTYTREDVVEINCHGGLVATNEILQLILSHGARMAEPGEFTKRAFLNGRLDLSQAEAVMDLIRAKTDKSMKVALNQLDGDLSKLIRHLRQDILDVLAQVEVNIDYPEYDAVETMTTKMLKEKATEVAQSINQLLATAKQGKVLREGLATAIIGRPNVGKSSLLNHLLHEDKAIVTDVAGTTRDVIEEYVNVRGVPLKLVDTAGIRDTEDKVEKIGVERSRKAIGAADLVLLVLDNSQPLTAEDRELLQETDQSKRIVILNKTDLPARLDQAELAQLVDLSDVLSMSVLEQSGVTQLEQRIAKMFFNEGIESSQNNVMVTNARHIGLLNQAKQALQDVQTGLAAGMPVDLVQIDMTRCWEFLGQITGDSYEDELLDQLFSQFCLGK.

Residues R26, E88, and R127 each contribute to the (6S)-5-formyl-5,6,7,8-tetrahydrofolate site. One can recognise a TrmE-type G domain in the interval 224–383; sequence GLATAIIGRP…LEQRIAKMFF (160 aa). A K(+)-binding site is contributed by N234. GTP contacts are provided by residues 234–239, 253–259, and 278–281; these read NVGKSS, TDVAGTT, and DTAG. Residue S238 participates in Mg(2+) binding. K(+)-binding residues include T253, V255, and T258. Residue T259 participates in Mg(2+) binding. K463 contacts (6S)-5-formyl-5,6,7,8-tetrahydrofolate.

It belongs to the TRAFAC class TrmE-Era-EngA-EngB-Septin-like GTPase superfamily. TrmE GTPase family. Homodimer. Heterotetramer of two MnmE and two MnmG subunits. Requires K(+) as cofactor.

It localises to the cytoplasm. Functionally, exhibits a very high intrinsic GTPase hydrolysis rate. Involved in the addition of a carboxymethylaminomethyl (cmnm) group at the wobble position (U34) of certain tRNAs, forming tRNA-cmnm(5)s(2)U34. The protein is tRNA modification GTPase MnmE of Lactiplantibacillus plantarum (strain ATCC BAA-793 / NCIMB 8826 / WCFS1) (Lactobacillus plantarum).